We begin with the raw amino-acid sequence, 41 residues long: Minor histocompatibility protein HB-1 (41 aa).

The segment at 9–17 is loss of recognition by cytotoxic T lymphocyte (CTL); the sequence is EEKRGSLHV.

In terms of assembly, HB-1 forms a complex with MHC class I HLA-B44. In terms of tissue distribution, expressed in acute lymphoblastic leukemia B-cells and Epstein-Barr virus-transformed B-cells.

In terms of biological role, precursor of the histocomplatibility antigen HB-1. More generally, minor histocomplatibility antigens (mHags) refer to immunogenic peptide which, when complexed with MHC, can generate an immune response after recognition by specific T-cells. The peptides are derived from polymorphic intracellular proteins, which are cleaved by normal pathways of antigen processing. The binding of these peptides to MHC class I or class II molecules and its expression on the cell surface can stimulate T-cell responses and thereby trigger graft rejection or graft-versus-host disease (GVHD) after hematopoietic stem cell transplantation from HLA-identical sibling donor. GVHD is a frequent complication after bone marrow transplantation (BMT), due to mismatch of minor histocomplatibility antigen in HLA-matched sibling marrow transplants. HB-1 is presented on the cell surface by MHC class I HLA-B44. This complex specifically elicits donor-cytotoxic T lymphocyte (CTL) reactivity in B-cell acute lymphoblastic leukemia (B-ALL) after treatment by HLA-identical allogenic bone marrow transplantation (BMT). It induces cell recognition and lysis by CTL. However, HB-1 restricted expression in B-ALL cells and not in normal tissues may allow a specific CTL reactivity against B-ALL without the risk of evoking graft-versus-host disease. The protein is Minor histocompatibility protein HB-1 (HMHB1) of Homo sapiens (Human).